A 128-amino-acid chain; its full sequence is Aspartate 1-decarboxylase (128 aa).

The active-site Schiff-base intermediate with substrate; via pyruvic acid is Ser25. Ser25 is modified (pyruvic acid (Ser)). Residue Thr57 coordinates substrate. Tyr58 acts as the Proton donor in catalysis. 73 to 75 (GAA) lines the substrate pocket.

This sequence belongs to the PanD family. Heterooctamer of four alpha and four beta subunits. It depends on pyruvate as a cofactor. Post-translationally, is synthesized initially as an inactive proenzyme, which is activated by self-cleavage at a specific serine bond to produce a beta-subunit with a hydroxyl group at its C-terminus and an alpha-subunit with a pyruvoyl group at its N-terminus.

The protein localises to the cytoplasm. It carries out the reaction L-aspartate + H(+) = beta-alanine + CO2. It functions in the pathway cofactor biosynthesis; (R)-pantothenate biosynthesis; beta-alanine from L-aspartate: step 1/1. Catalyzes the pyruvoyl-dependent decarboxylation of aspartate to produce beta-alanine. This is Aspartate 1-decarboxylase from Ruminiclostridium cellulolyticum (strain ATCC 35319 / DSM 5812 / JCM 6584 / H10) (Clostridium cellulolyticum).